The primary structure comprises 1058 residues: MQKIAKQALSSLSSLAKSPANAMGSISHLPAYGHRLLPVLIDEISRDEPDRVLFYTPRNGQPSQGYDEVTTKIFANAIDRLCGWLDSQLGSPTVSKTIAYIGQNDLRYFIIMIASTKLGHRLLLSSPRNSVEGHVSLIKQSGCELWIASSGLGHHEFLQDLHIPSVEAPELSELLDPTLAKPYIYQKSWHEGKSDVLALLHTSGSTGLPKLVPVYLETAATVDGFHLMEPTDGKRPTGVEWTGTRQLCAMPLFHVAGICLGLYSAVFFNWIVVLPSVGPIMQHVIEDALDHISLDSAFISPSVLQDISKSSRVLEKLSKLKFITSAGGPIPQSVGDLIHPRVPIMQTMGMTEGQWLASVVMHPDEWAYYYFHPRTGVEMRPYSEDLFELVFVQNPKLSATQPVFKTFPDLDIWETKDLYSRHPKHPDLWKYEMRRDDLIILSNGEKFNPLAAEGKLISHPWIAAAYLTGRGRFQTAALIYPDDSSFNNSDDTIIDNIWPTFEEVNKSLPAFAQIHRDFVKIVRTPFPCTPKGTLARNETEKSFNADINAIYDRSTHGKPSVHINGTTEDVVRSGIREAIETVSGLVDLKDDDNIFTRGFDSLHVIRLAGLLSSAFYQPLEVEPGTIYTNPTISQLSHSVWTHLEYGPQDRIHHSEVTLEMLAKYIQAFEPPRESKEHIVLTGTTGEIGSYLLDDICKNDKVAKVWCLNRSVDAFQRQVDSAKSKGLSSNWQSKAKFVRYDVTSENLGLSQDDLEEIKNEATAIIHNAWEVNFNLPLSSFDPQFVGLQGLVDVCRATRHKIRFFFVSSISAAMNWPSDLLGPVPEASISRFDAPINGYGSSKLVAEHLLSKAARSGVLSLSVLRVGQVAGPVRTLGEGSIWTRRDWVPAIIDASVHLRALPLDLGSASILDWIPIDLLAEVIGQLVVPVNPVVGQENYYNLLNPRTPSWKDTLPGLKAHLEASFSEKFEIIPLQEWINRMRGAEKTIVKEVSEGSSETARRAQSGLKLLAFFETLASETEGSRGLEWSKANALAQSSILACMEPVSSAWFDTWLTQWGY.

Residues 43-365 are adenylation (A) domain; the sequence is EISRDEPDRV…LASVVMHPDE (323 aa). A Carrier domain is found at 566 to 643; the sequence is TTEDVVRSGI…QLSHSVWTHL (78 aa). Serine 601 carries the post-translational modification O-(pantetheine 4'-phosphoryl)serine. Residues 680–921 are thioester reductase (TR) domain; the sequence is LTGTTGEIGS…IPIDLLAEVI (242 aa).

Its pathway is mycotoxin biosynthesis. Functionally, non-canonical non-ribosomal peptide synthetase; part of the gene cluster that mediates the biosynthesis of fusaric acid, a mycotoxin with low to moderate toxicity to animals and humans, but with high phytotoxic properties. L-aspartate is suggested as fusaric acid amino acid precursor that is activated and further processed to O-acetyl-L-homoserine by cluster enzymes aspartate kinase FUB3 and homoserine O-acetyltransferase FUB5, as well as enzymes of the primary metabolism. The polyketide synthase (PKS) FUB1 generates the triketide trans-2-hexenal which is presumptively released by the hydrolase FUB4 and linked to the NRPS-bound amino acid precursor by NAD(P)-dependent dehydrogenase FUB6. FUB1, FUB4, and the non-canonical NRPS Fub8 may form an enzyme complex. Further processing of the NRPS-bound intermediate might be carried out by FUB6 and the sulfhydrylase FUB7, enabling a spontaneous electrocyclization to close the carbon backbone of fusaric acid. Dihydrofusaric acid is likely to be released via reduction by the thioester reductase (TR) domain of FUB8 whereupon the final oxidation to fusaric acid may (also) be performed by the FMN-dependent dehydrogenase FUB9. The sequence is that of Non-canonical non-ribosomal peptide synthetase FUB8 from Gibberella moniliformis (strain M3125 / FGSC 7600) (Maize ear and stalk rot fungus).